The following is a 1114-amino-acid chain: Probable guanine nucleotide exchange factor MCF2L2 (1114 aa).

One can recognise a CRAL-TRIO domain in the interval 11 to 193 (PQELTRRLAT…ELGGTLEYRH (183 aa)). One copy of the Spectrin repeat lies at 323 to 428 (QHFEHDFCKA…KWDILGKSLE (106 aa)). The interval 530 to 614 (QTRPVQPVAP…NPELEQQARL (85 aa)) is disordered. Residues 546 to 559 (KWVSSKTSQPSTSV) are compositionally biased toward polar residues. Positions 577-606 (LNSRGKEDDETKFEVKSEEIFESHHERGNP) are enriched in basic and acidic residues. One can recognise a DH domain in the interval 619–822 (PRRRIIRDLL…EDLIKSCELA (204 aa)). Residues 834-954 (DIGKLGKLLL…WFSEISKLLM (121 aa)) enclose the PH domain. Residues 962–975 (DQGNPQFEMSTSKG) are compositionally biased toward polar residues. Residues 962 to 1114 (DQGNPQFEMS…LRPRTSAQES (153 aa)) are disordered. Positions 986–997 (NMERATTSKEDP) are enriched in basic and acidic residues. The segment covering 1017 to 1028 (TFEDCEGAEDME) has biased composition (acidic residues). Basic and acidic residues-rich tracts occupy residues 1043–1067 (DDSH…GEKE) and 1074–1084 (TATRSTEEERA).

It belongs to the MCF2 family. As to expression, significantly expressed in brain and modestly in pancreas, brain and testis.

Functionally, probably functions as a guanine nucleotide exchange factor. The chain is Probable guanine nucleotide exchange factor MCF2L2 (MCF2L2) from Homo sapiens (Human).